Reading from the N-terminus, the 839-residue chain is Small conductance calcium-activated potassium channel protein 2 (839 aa).

Disordered regions lie at residues 1 to 33 (MPIVLVRPTNRTRRLDSTGAGMGPSSHQQQESP), 64 to 115 (QRGF…QQPG), 195 to 258 (ALRQ…RRES), and 280 to 375 (SNLS…KKNQ). Low complexity-rich tracts occupy residues 198–212 (QQYAQQPASASQYHQ) and 219–235 (ATSPTGSLGSLGSGPPL). Basic residues predominate over residues 236–253 (SHHHHHPHPAHHQHHQPQ). Over residues 313 to 326 (SSPSAAAAASSSAP) the composition is skewed to low complexity. Over residues 345 to 363 (GTGGGGSTGGGGGGSGHGS) the composition is skewed to gly residues. A helical membrane pass occupies residues 398–418 (ALIFGMFGIVVMVIETELSWG). A Phosphotyrosine modification is found at Tyr420. The chain crosses the membrane as a helical span at residues 428–448 (LALKCLISLSTIILLGLIIVY). The helical transmembrane segment at 474–494 (IFFICLEILVCAIHPIPGNYT) threads the bilayer. Residues 516-536 (IILSIPMFLRLYLIARVMLLH) form a helical membrane-spanning segment. A helical membrane pass occupies residues 565–585 (LMTICPGTVLLVFSISLWIIA). Positions 605-625 (FLGAMWLISITFLSIGYGDMV) form an intramembrane region, pore-forming. Residues 634–654 (VCLLTGIMGAGCTALVVAVVA) traverse the membrane as a helical segment. Residues 672–748 (DTQLTKRVKN…LVDLAKTQNI (77 aa)) are calmodulin-binding. A compositionally biased stretch (basic and acidic residues) spans 810 to 819 (HVSYNAERSR). Positions 810–839 (HVSYNAERSRSSSRRRRSSSTAPPTSSESS) are disordered. Low complexity predominate over residues 828–839 (SSTAPPTSSESS).

It belongs to the potassium channel KCNN family. KCa2.2/KCNN2 subfamily. Homodimer. Heteromultimer with KCNN1 and KCNN3. The complex is composed of 4 channel subunits each of which binds to a calmodulin subunit which regulates the channel activity through calcium-binding. Interacts (via N-terminal domain) with MPP2. In terms of tissue distribution, expressed in atrial and ventricular myocytes with higher levels in atrial myocytes (at protein level). Highly expressed in brain, liver and colon with low levels in kidney and testis. In colon, detected in smooth muscle cells.

It is found in the membrane. The protein resides in the cytoplasm. Its subcellular location is the myofibril. The protein localises to the sarcomere. It localises to the z line. The enzyme catalyses K(+)(in) = K(+)(out). Inhibited by bee venom neurotoxin apamin. Inhibited by UCL 1684 and tetraethylammonium (TEA). Its function is as follows. Small conductance calcium-activated potassium channel that mediates the voltage-independent transmembrane transfer of potassium across the cell membrane through a constitutive interaction with calmodulin which binds the intracellular calcium allowing its opening. The current is characterized by a voltage-independent activation, an intracellular calcium concentration increase-dependent activation and a single-channel conductance of about 3 picosiemens. Also presents an inwardly rectifying current, thus reducing its already small outward conductance of potassium ions, which is particularly the case when the membrane potential displays positive values, above + 20 mV. The inward rectification could be due to a blockade of the outward current by intracellular divalent cations such as calcium and magnesium and could also be due to an intrinsic property of the channel pore, independent of intracellular divalent ions. There are three positively charged amino acids in the S6 transmembrane domain, close to the pore, that collectively control the conductance and rectification through an electrostatic mechanism. Additionally, electrostatic contributions from these residues also play an important role in determining the intrinsic open probability of the channel in the absence of calcium, affecting the apparent calcium affinity for activation. Forms an heteromeric complex with calmodulin, which is constitutively associated in a calcium-independent manner. Channel opening is triggered when calcium binds the calmodulin resulting in a rotary movement leading to the formation of the dimeric complex to open the gate. Plays a role in the repolarization phase of cardiac action potential. This chain is Small conductance calcium-activated potassium channel protein 2, found in Mus musculus (Mouse).